A 226-amino-acid chain; its full sequence is Thioredoxin domain-containing protein 9 (226 aa).

The 106-residue stretch at 75-180 (EIGSERDFFQ…TTETLEWRLG (106 aa)) folds into the Thioredoxin domain. A phosphoserine mark is found at Ser188, Ser221, and Ser223.

In terms of assembly, forms ternary complexes with the chaperonin TCP1 complex, spanning the cylindrical chaperonin cavity and contacting at least 2 subunits.

It localises to the cytoplasm. It is found in the nucleus. Its subcellular location is the cytoskeleton. The protein resides in the microtubule organizing center. The protein localises to the centrosome. It localises to the midbody. Significantly diminishes the chaperonin TCP1 complex ATPase activity, thus negatively impacts protein folding, including that of actin or tubulin. This is Thioredoxin domain-containing protein 9 (Txndc9) from Rattus norvegicus (Rat).